Reading from the N-terminus, the 283-residue chain is Pantothenate synthetase 1 (283 aa).

Position 30–37 (30–37 (MGYLHDGH)) interacts with ATP. His-37 serves as the catalytic Proton donor. Gln-61 is a (R)-pantoate binding site. Gln-61 lines the beta-alanine pocket. An ATP-binding site is contributed by 147-150 (GQKD). Residue Gln-153 coordinates (R)-pantoate. ATP contacts are provided by residues Val-176 and 184–187 (MSSR).

This sequence belongs to the pantothenate synthetase family. Homodimer.

The protein resides in the cytoplasm. It catalyses the reaction (R)-pantoate + beta-alanine + ATP = (R)-pantothenate + AMP + diphosphate + H(+). Its pathway is cofactor biosynthesis; (R)-pantothenate biosynthesis; (R)-pantothenate from (R)-pantoate and beta-alanine: step 1/1. Functionally, catalyzes the condensation of pantoate with beta-alanine in an ATP-dependent reaction via a pantoyl-adenylate intermediate. This chain is Pantothenate synthetase 1, found in Bradyrhizobium diazoefficiens (strain JCM 10833 / BCRC 13528 / IAM 13628 / NBRC 14792 / USDA 110).